The sequence spans 527 residues: Putative WEB family protein At4g17210 (527 aa).

Disordered stretches follow at residues 1 to 28 (MAKI…IDTR) and 46 to 70 (FSKK…TDVS). Positions 55–68 (SSSSSSQSQDTTTD) are enriched in low complexity. Coiled coils occupy residues 95 to 159 (AAKA…YILI), 202 to 389 (SNKI…AKHM), and 436 to 513 (KKIR…EAHS).

Belongs to the WEB family.

In Arabidopsis thaliana (Mouse-ear cress), this protein is Putative WEB family protein At4g17210.